Reading from the N-terminus, the 513-residue chain is ATP synthase subunit alpha (513 aa).

169–176 serves as a coordination point for ATP; sequence GDRQTGKT.

This sequence belongs to the ATPase alpha/beta chains family. In terms of assembly, F-type ATPases have 2 components, CF(1) - the catalytic core - and CF(0) - the membrane proton channel. CF(1) has five subunits: alpha(3), beta(3), gamma(1), delta(1), epsilon(1). CF(0) has three main subunits: a(1), b(2) and c(9-12). The alpha and beta chains form an alternating ring which encloses part of the gamma chain. CF(1) is attached to CF(0) by a central stalk formed by the gamma and epsilon chains, while a peripheral stalk is formed by the delta and b chains.

The protein resides in the cell inner membrane. It catalyses the reaction ATP + H2O + 4 H(+)(in) = ADP + phosphate + 5 H(+)(out). Produces ATP from ADP in the presence of a proton gradient across the membrane. The alpha chain is a regulatory subunit. The chain is ATP synthase subunit alpha from Shewanella loihica (strain ATCC BAA-1088 / PV-4).